Consider the following 239-residue polypeptide: Purine nucleoside phosphorylase DeoD-type (239 aa).

His5 serves as a coordination point for a purine D-ribonucleoside. Phosphate-binding positions include Gly21, Arg25, Arg44, and 88 to 91 (RVGS). A purine D-ribonucleoside-binding positions include 180–182 (EME) and 204–205 (SD). Asp205 serves as the catalytic Proton donor.

It belongs to the PNP/UDP phosphorylase family. In terms of assembly, homohexamer; trimer of homodimers.

The catalysed reaction is a purine D-ribonucleoside + phosphate = a purine nucleobase + alpha-D-ribose 1-phosphate. It carries out the reaction a purine 2'-deoxy-D-ribonucleoside + phosphate = a purine nucleobase + 2-deoxy-alpha-D-ribose 1-phosphate. Functionally, catalyzes the reversible phosphorolytic breakdown of the N-glycosidic bond in the beta-(deoxy)ribonucleoside molecules, with the formation of the corresponding free purine bases and pentose-1-phosphate. The sequence is that of Purine nucleoside phosphorylase DeoD-type from Cronobacter sakazakii (strain ATCC BAA-894) (Enterobacter sakazakii).